The chain runs to 198 residues: MIRYPNGKSYQPKTAASSLQKKPSYSNRGMTLEDDLNETNMYYQSHSIAVIHKKPTPVQIVQVDYPKRSAAVIKEAYFKQSSTTDYNGVYKGRYIDFEAKETKSRTSFPLQNFHDHQIEHMKQVVAQDGICFVIISAFEEIYFLEAEKLFYFWERKKQNGRKSIRKDELQEAAHPISLGYSPRIDYIKIIDQLYFSPS.

The segment at 1–29 (MIRYPNGKSYQPKTAASSLQKKPSYSNRG) is disordered. The span at 8–29 (KSYQPKTAASSLQKKPSYSNRG) shows a compositional bias: polar residues. Mg(2+) is bound by residues Thr-83, Asp-85, Glu-98, and Gln-117.

The protein belongs to the RecU family. It depends on Mg(2+) as a cofactor.

The protein localises to the cytoplasm. The catalysed reaction is Endonucleolytic cleavage at a junction such as a reciprocal single-stranded crossover between two homologous DNA duplexes (Holliday junction).. In terms of biological role, endonuclease that resolves Holliday junction intermediates in genetic recombination. Cleaves mobile four-strand junctions by introducing symmetrical nicks in paired strands. Promotes annealing of linear ssDNA with homologous dsDNA. Required for DNA repair, homologous recombination and chromosome segregation. This Bacillus licheniformis (strain ATCC 14580 / DSM 13 / JCM 2505 / CCUG 7422 / NBRC 12200 / NCIMB 9375 / NCTC 10341 / NRRL NRS-1264 / Gibson 46) protein is Holliday junction resolvase RecU.